A 330-amino-acid polypeptide reads, in one-letter code: Aspartate--ammonia ligase (330 aa).

It belongs to the class-II aminoacyl-tRNA synthetase family. AsnA subfamily.

The protein resides in the cytoplasm. It catalyses the reaction L-aspartate + NH4(+) + ATP = L-asparagine + AMP + diphosphate + H(+). Its pathway is amino-acid biosynthesis; L-asparagine biosynthesis; L-asparagine from L-aspartate (ammonia route): step 1/1. This Streptococcus pyogenes serotype M3 (strain ATCC BAA-595 / MGAS315) protein is Aspartate--ammonia ligase.